Here is a 1483-residue protein sequence, read N- to C-terminus: Chromosome partition protein MukB (1483 aa).

34-41 contacts ATP; that stretch reads GGNGAGKS. Coiled-coil stretches lie at residues 311–426 and 547–607; these read EMAR…LQRA and GQQV…WLAA. The flexible hinge stretch occupies residues 666-783; it reads PGGSEDARLN…KVPLFGRAAR (118 aa). Coiled-coil stretches lie at residues 835-1115 and 1206-1266; these read EAAL…SAKA and DDPV…QAVS. The tract at residues 850–870 is disordered; the sequence is RELNNHESENQQQRQQYEQAK.

Belongs to the SMC family. MukB subfamily. As to quaternary structure, homodimerization via its hinge domain. Binds to DNA via its C-terminal region. Interacts, and probably forms a ternary complex, with MukE and MukF via its C-terminal region. The complex formation is stimulated by calcium or magnesium. Interacts with tubulin-related protein FtsZ.

Its subcellular location is the cytoplasm. It is found in the nucleoid. In terms of biological role, plays a central role in chromosome condensation, segregation and cell cycle progression. Functions as a homodimer, which is essential for chromosome partition. Involved in negative DNA supercoiling in vivo, and by this means organize and compact chromosomes. May achieve or facilitate chromosome segregation by condensation DNA from both sides of a centrally located replisome during cell division. This is Chromosome partition protein MukB from Erwinia tasmaniensis (strain DSM 17950 / CFBP 7177 / CIP 109463 / NCPPB 4357 / Et1/99).